Consider the following 392-residue polypeptide: Neutrophil cytosol factor 1 (392 aa).

Residues His4 to Leu125 form the PX domain. 2 SH3 domains span residues Ile156–Ser215 and Tyr226–Gln285. The segment at Ala290–Val392 is disordered. Ser304 and Ser305 each carry phosphoserine. A compositionally biased stretch (basic residues) spans His310–Arg319. A phosphoserine mark is found at Ser321, Ser329, and Ser348. A compositionally biased stretch (basic and acidic residues) spans Ile376–Lys385.

In terms of assembly, component of the phagocyte NADPH oxidase complex composed of an obligatory core heterodimer formed by the membrane proteins CYBA and CYBB and the cytosolic regulatory subunits NCF1/p47-phox, NCF2/p67-phox, NCF4/p40-phox and the small GTPase RAC1 or RAC2. Part of a cytosolic complex composed at least by NCF1, NCF2 and NCF4. Interacts (via C-terminus) with NCF2 (via the C-terminal SH3 domain). Interacts with NCF4. Interacts with CYBB. Interacts (via the second SH3 domain) with CYBA; interaction is phosphorylation-dependent. Interacts with NOXA1. Interacts with ADAM15. Interacts with TRAF4. Interacts with FASLG. Interacts with PARK7 (via C-terminus); the interaction is enhanced by LPS and modulates NCF1 phosphorylation and membrane translocation. Post-translationally, phosphorylated by PRKCD; phosphorylation induces activation of NCF1, leading to assembly and activation of the NADPH oxidase complex.

The protein localises to the cytoplasm. It localises to the cytosol. Its subcellular location is the membrane. Its function is as follows. Subunit of the phagocyte NADPH oxidase complex that mediates the transfer of electrons from cytosolic NADPH to O2 to produce the superoxide anion (O2(-)). In the activated complex, electrons are first transferred from NADPH to flavin adenine dinucleotide (FAD) and subsequently transferred via two heme molecules to molecular oxygen, producing superoxide through an outer-sphere reaction. Activation of the NADPH oxidase complex is initiated by the assembly of cytosolic subunits of the NADPH oxidase complex with the core NADPH oxidase complex to form a complex at the plasma membrane or phagosomal membrane. This activation process is initiated by phosphorylation dependent binding of the cytosolic NCF1/p47-phox subunit to the C-terminus of CYBA/p22-phox. The polypeptide is Neutrophil cytosol factor 1 (Bos taurus (Bovine)).